We begin with the raw amino-acid sequence, 106 residues long: Evasin P1168 (106 aa).

Residues 1–24 form the signal peptide; the sequence is MEVKISTFLQIAVLIVLGIHLIAA. 3 disulfide bridges follow: Cys-45-Cys-67, Cys-49-Cys-69, and Cys-60-Cys-80. N-linked (GlcNAc...) asparagine glycosylation is found at Asn-48, Asn-54, and Asn-64.

It localises to the secreted. Functionally, salivary chemokine-binding protein which binds to host chemokines CXCL1, CXCL2 and CXCL8. The chain is Evasin P1168 from Ixodes ricinus (Common tick).